A 903-amino-acid chain; its full sequence is Translation initiation factor IF-2 (903 aa).

Disordered stretches follow at residues 57-171 (EKFK…QRRR) and 267-318 (PTPQ…EAVT). Over residues 69 to 163 (KKEAKEPSEK…SEPQKPKESL (95 aa)) the composition is skewed to basic and acidic residues. A compositionally biased stretch (low complexity) spans 267 to 278 (PTPQPMQKTKQP). The span at 299–308 (RRARKKHKKP) shows a compositional bias: basic residues. Positions 402–569 (PRAPVITIMG…IVLLQAEILE (168 aa)) constitute a tr-type G domain. The segment at 411-418 (GHVDHGKT) is G1. 411–418 (GHVDHGKT) serves as a coordination point for GTP. The G2 stretch occupies residues 436 to 440 (GITQH). The tract at residues 457–460 (DTPG) is G3. Residues 457–461 (DTPGH) and 511–514 (NKMD) each bind GTP. The tract at residues 511–514 (NKMD) is G4. The G5 stretch occupies residues 547-549 (SAK).

The protein belongs to the TRAFAC class translation factor GTPase superfamily. Classic translation factor GTPase family. IF-2 subfamily.

It is found in the cytoplasm. Functionally, one of the essential components for the initiation of protein synthesis. Protects formylmethionyl-tRNA from spontaneous hydrolysis and promotes its binding to the 30S ribosomal subunits. Also involved in the hydrolysis of GTP during the formation of the 70S ribosomal complex. The chain is Translation initiation factor IF-2 from Campylobacter curvus (strain 525.92).